Here is a 302-residue protein sequence, read N- to C-terminus: MLDRDNALQVAAVLSKALPYIQRFAGKTIVIKYGGNAMTDEELKNSFARDVVMMKLVGINPIVVHGGGPQIGDLLQRLNIKSSFINGLRVTDSETMDVVEMVLGGSVNKDIVALINRNGGKAIGLTGKDANFITARKLEVTRATPDMQKPEIIDIGHVGEVTGVRKDIITMLTDSDCIPVIAPIGVGQDGASYNINADLVAGKVAEVLQAEKLMLLTNIAGLMNKEGKVLTGLSTKQVDELIADGTIHGGMLPKIECALSAVKNGVHSAHIIDGRVPHATLLEIFTDEGVGTLITRKGCDDA.

Residues 67 to 68 (GG), Arg89, and Asn194 each bind substrate.

It belongs to the acetylglutamate kinase family. ArgB subfamily.

The protein resides in the cytoplasm. The enzyme catalyses N-acetyl-L-glutamate + ATP = N-acetyl-L-glutamyl 5-phosphate + ADP. It participates in amino-acid biosynthesis; L-arginine biosynthesis; N(2)-acetyl-L-ornithine from L-glutamate: step 2/4. Functionally, catalyzes the ATP-dependent phosphorylation of N-acetyl-L-glutamate. The chain is Acetylglutamate kinase from Hahella chejuensis (strain KCTC 2396).